The chain runs to 419 residues: Histidine--tRNA ligase (419 aa).

This sequence belongs to the class-II aminoacyl-tRNA synthetase family. In terms of assembly, homodimer.

It localises to the cytoplasm. It carries out the reaction tRNA(His) + L-histidine + ATP = L-histidyl-tRNA(His) + AMP + diphosphate + H(+). The sequence is that of Histidine--tRNA ligase from Halothermothrix orenii (strain H 168 / OCM 544 / DSM 9562).